The primary structure comprises 228 residues: Phosphoribosylformylglycinamidine synthase subunit PurQ (228 aa).

The Glutamine amidotransferase type-1 domain maps to Lys-2 to Arg-225. Cys-86 (nucleophile) is an active-site residue. Active-site residues include His-194 and Glu-196.

Part of the FGAM synthase complex composed of 1 PurL, 1 PurQ and 2 PurS subunits.

Its subcellular location is the cytoplasm. The enzyme catalyses N(2)-formyl-N(1)-(5-phospho-beta-D-ribosyl)glycinamide + L-glutamine + ATP + H2O = 2-formamido-N(1)-(5-O-phospho-beta-D-ribosyl)acetamidine + L-glutamate + ADP + phosphate + H(+). It carries out the reaction L-glutamine + H2O = L-glutamate + NH4(+). It participates in purine metabolism; IMP biosynthesis via de novo pathway; 5-amino-1-(5-phospho-D-ribosyl)imidazole from N(2)-formyl-N(1)-(5-phospho-D-ribosyl)glycinamide: step 1/2. Functionally, part of the phosphoribosylformylglycinamidine synthase complex involved in the purines biosynthetic pathway. Catalyzes the ATP-dependent conversion of formylglycinamide ribonucleotide (FGAR) and glutamine to yield formylglycinamidine ribonucleotide (FGAM) and glutamate. The FGAM synthase complex is composed of three subunits. PurQ produces an ammonia molecule by converting glutamine to glutamate. PurL transfers the ammonia molecule to FGAR to form FGAM in an ATP-dependent manner. PurS interacts with PurQ and PurL and is thought to assist in the transfer of the ammonia molecule from PurQ to PurL. This Lacticaseibacillus paracasei (strain ATCC 334 / BCRC 17002 / CCUG 31169 / CIP 107868 / KCTC 3260 / NRRL B-441) (Lactobacillus paracasei) protein is Phosphoribosylformylglycinamidine synthase subunit PurQ.